Here is a 246-residue protein sequence, read N- to C-terminus: Exosome complex component Rrp41 (246 aa).

It belongs to the RNase PH family. Rrp41 subfamily. Component of the archaeal exosome complex. Forms a hexameric ring-like arrangement composed of 3 Rrp41-Rrp42 heterodimers. The hexameric ring associates with a trimer of Rrp4 and/or Csl4 subunits.

The protein resides in the cytoplasm. Catalytic component of the exosome, which is a complex involved in RNA degradation. Has 3'-&gt;5' exoribonuclease activity. Can also synthesize heteromeric RNA-tails. In Pyrobaculum aerophilum (strain ATCC 51768 / DSM 7523 / JCM 9630 / CIP 104966 / NBRC 100827 / IM2), this protein is Exosome complex component Rrp41.